We begin with the raw amino-acid sequence, 449 residues long: Bifunctional protein GlmU (449 aa).

The pyrophosphorylase stretch occupies residues 1 to 226 (MNNIHAIILA…KFEVLGVNDK (226 aa)). UDP-N-acetyl-alpha-D-glucosamine contacts are provided by residues 9 to 12 (LAAG), Lys23, Gln73, 78 to 79 (GT), 100 to 102 (YGD), Gly137, Glu151, Asn166, and Asn224. Mg(2+) is bound at residue Asp102. Residue Asn224 coordinates Mg(2+). The tract at residues 227-247 (VQLAELERLFQKDQAIQFMKQ) is linker. Residues 248–449 (GLGLKDPTRF…QKNLKYRSKK (202 aa)) are N-acetyltransferase. The UDP-N-acetyl-alpha-D-glucosamine site is built by Arg330 and Lys348. His360 serves as the catalytic Proton acceptor. The UDP-N-acetyl-alpha-D-glucosamine site is built by Tyr363 and Asn374. Acetyl-CoA contacts are provided by residues Ala377, 383-384 (NY), Ser402, Ala420, and Arg437.

This sequence in the N-terminal section; belongs to the N-acetylglucosamine-1-phosphate uridyltransferase family. In the C-terminal section; belongs to the transferase hexapeptide repeat family. Homotrimer. It depends on Mg(2+) as a cofactor.

The protein localises to the cytoplasm. It carries out the reaction alpha-D-glucosamine 1-phosphate + acetyl-CoA = N-acetyl-alpha-D-glucosamine 1-phosphate + CoA + H(+). The enzyme catalyses N-acetyl-alpha-D-glucosamine 1-phosphate + UTP + H(+) = UDP-N-acetyl-alpha-D-glucosamine + diphosphate. It participates in nucleotide-sugar biosynthesis; UDP-N-acetyl-alpha-D-glucosamine biosynthesis; N-acetyl-alpha-D-glucosamine 1-phosphate from alpha-D-glucosamine 6-phosphate (route II): step 2/2. The protein operates within nucleotide-sugar biosynthesis; UDP-N-acetyl-alpha-D-glucosamine biosynthesis; UDP-N-acetyl-alpha-D-glucosamine from N-acetyl-alpha-D-glucosamine 1-phosphate: step 1/1. It functions in the pathway bacterial outer membrane biogenesis; LPS lipid A biosynthesis. Its function is as follows. Catalyzes the last two sequential reactions in the de novo biosynthetic pathway for UDP-N-acetylglucosamine (UDP-GlcNAc). The C-terminal domain catalyzes the transfer of acetyl group from acetyl coenzyme A to glucosamine-1-phosphate (GlcN-1-P) to produce N-acetylglucosamine-1-phosphate (GlcNAc-1-P), which is converted into UDP-GlcNAc by the transfer of uridine 5-monophosphate (from uridine 5-triphosphate), a reaction catalyzed by the N-terminal domain. This chain is Bifunctional protein GlmU, found in Vesicomyosocius okutanii subsp. Calyptogena okutanii (strain HA).